We begin with the raw amino-acid sequence, 526 residues long: piRNA biogenesis factor prde-1 (526 aa).

The tract at residues 436–526 (EAKEEPIDKK…RRRGCEIRRK (91 aa)) is disordered. The segment covering 439 to 448 (EEPIDKKKDP) has biased composition (basic and acidic residues). The segment covering 458–467 (GKKRRGRKPK) has biased composition (basic residues). Residues 468–487 (KKDDPKMELKDEVKDLKDFV) are compositionally biased toward basic and acidic residues. Low complexity predominate over residues 489–498 (EESTSASSSA).

Expressed in male and female germ cells.

The protein resides in the nucleus. Its subcellular location is the chromosome. Its function is as follows. Nuclear factor required for the production of piwi-interacting RNA (piRNA) precursors. Specifically required for piRNAs produced from loci associated with the Ruby motif. Promotes binding of the transcription factor snpc-4 at piRNA genomic clusters. Required for normal fertility. The polypeptide is piRNA biogenesis factor prde-1 (Caenorhabditis elegans).